The chain runs to 386 residues: Small ribosomal subunit protein uS3m (386 aa).

It belongs to the universal ribosomal protein uS3 family.

The protein resides in the mitochondrion. Functionally, essential for mitochondrial protein synthesis and required for the maturation of small ribosomal subunits. The polypeptide is Small ribosomal subunit protein uS3m (VAR1) (Wickerhamomyces canadensis (Yeast)).